A 582-amino-acid chain; its full sequence is Colicin-E9 (582 aa).

5 disordered regions span residues 1–74 (MSGG…SGGG), 246–270 (SPGV…NTRD), 294–321 (PDQV…EAAE), 422–489 (ADAA…IADK), and 510–542 (SKDP…QQVG). Positions 20–35 (INGGPTGIGVSGGASD) are enriched in gly residues. Over residues 36–45 (GSGWSSENNP) the composition is skewed to low complexity. A compositionally biased stretch (gly residues) spans 46–74 (WGGGSGSGIHWGGGSGRGNGGGNGNSGGG). 3 stretches are compositionally biased toward basic and acidic residues: residues 297 to 321 (VKQR…EAAE), 430 to 453 (QERR…ESKR), and 465 to 476 (PVGDKWLDDAGK). The segment covering 516–529 (SKNLNPSNKSSVSK) has biased composition (low complexity). Zn(2+)-binding residues include His-550, His-575, and His-579.

It belongs to the colicin/pyosin nuclease family.

This plasmid-coded bactericidal protein is an endonuclease active on both single- and double-stranded DNA but with undefined specificity. Functionally, colicins are polypeptide toxins produced by and active against E.coli and closely related bacteria. In Escherichia coli, this protein is Colicin-E9 (col).